The primary structure comprises 246 residues: Small ribosomal subunit protein uS2 (246 aa).

It belongs to the universal ribosomal protein uS2 family.

The chain is Small ribosomal subunit protein uS2 from Stutzerimonas stutzeri (strain A1501) (Pseudomonas stutzeri).